A 282-amino-acid chain; its full sequence is Pantothenate synthetase (282 aa).

30–37 (MGYLHEGH) is an ATP binding site. Catalysis depends on H37, which acts as the Proton donor. Q61 contributes to the (R)-pantoate binding site. Q61 is a binding site for beta-alanine. 147–150 (GMKD) lines the ATP pocket. Residue Q153 participates in (R)-pantoate binding. Residues V176 and 184 to 187 (KSSR) contribute to the ATP site.

It belongs to the pantothenate synthetase family. In terms of assembly, homodimer.

It localises to the cytoplasm. It carries out the reaction (R)-pantoate + beta-alanine + ATP = (R)-pantothenate + AMP + diphosphate + H(+). Its pathway is cofactor biosynthesis; (R)-pantothenate biosynthesis; (R)-pantothenate from (R)-pantoate and beta-alanine: step 1/1. Its function is as follows. Catalyzes the condensation of pantoate with beta-alanine in an ATP-dependent reaction via a pantoyl-adenylate intermediate. The sequence is that of Pantothenate synthetase from Bacillus cereus (strain ATCC 10987 / NRS 248).